A 366-amino-acid chain; its full sequence is Phenylalanine--tRNA ligase alpha subunit (366 aa).

Position 259 (E259) interacts with Mg(2+).

This sequence belongs to the class-II aminoacyl-tRNA synthetase family. Phe-tRNA synthetase alpha subunit type 1 subfamily. Tetramer of two alpha and two beta subunits. Mg(2+) serves as cofactor.

It localises to the cytoplasm. It catalyses the reaction tRNA(Phe) + L-phenylalanine + ATP = L-phenylalanyl-tRNA(Phe) + AMP + diphosphate + H(+). The chain is Phenylalanine--tRNA ligase alpha subunit from Novosphingobium aromaticivorans (strain ATCC 700278 / DSM 12444 / CCUG 56034 / CIP 105152 / NBRC 16084 / F199).